We begin with the raw amino-acid sequence, 431 residues long: Evolutionarily conserved signaling intermediate in Toll pathway, mitochondrial (431 aa).

Residues 1-48 (MSWVQATLLARGLCRAWGGTCGAALTGTSISQVPRRLPRGLHCSAAAH) constitute a mitochondrion transit peptide. A Glycyl lysine isopeptide (Lys-Gly) (interchain with G-Cter in ubiquitin) cross-link involves residue lysine 372. The segment at 400-431 (LQTSSAGLEEPPLPEDHQEEDDNLQRQQQGQS) is disordered.

This sequence belongs to the ECSIT family. In terms of assembly, interacts with MAP3K1, SMAD4 and TRAF6. Interacts with SMAD1 only after BMP4-treatment. Part of the mitochondrial complex I assembly/MCIA complex that comprises at least the core subunits TMEM126B, NDUFAF1, ECSIT and ACAD9 and complement subunits such as COA1 and TMEM186. Interacts with NDUFAF1. Interacts with ACAD9. Interacts with TRIM59. Interacts with TMEM70 and TMEM242. Interacts (when ubiquitinated) with NF-kappa-B subunits RELA and NFKB1. Interacts with RIGI, IFIT1 and MAVS; these interactions promote RLR-mediated type I IFN induction. Interacts with SQSTM1; this interaction inhibits TLR4 signaling via functional regulation of the TRAF6-ECSIT complex. Interacts with cereblon/CRBN; this interaction inhibits the ubiquitination of ECSIT. In terms of processing, ubiquitinated on Lys-372; leading to translocation in the nucleus together with RELA and NFKB1 and expression of NF-kappa-B-dependent genes.

It localises to the cytoplasm. The protein localises to the nucleus. The protein resides in the mitochondrion. Functionally, adapter protein that plays a role in different signaling pathways including TLRs and IL-1 pathways or innate antiviral induction signaling. Plays a role in the activation of NF-kappa-B by forming a signal complex with TRAF6 and TAK1/MAP3K7 to activate TAK1/MAP3K7 leading to activation of IKKs. Once ubiquitinated, interacts with the dissociated RELA and NFKB1 proteins and translocates to the nucleus where it induces NF-kappa-B-dependent gene expression. Plays a role in innate antiviral immune response by bridging the pattern recognition receptors RIGI and MDA5/IFIT1 to the MAVS complex at the mitochondrion. Promotes proteolytic activation of MAP3K1. Involved in the BMP signaling pathway. Required for normal embryonic development. Its function is as follows. As part of the MCIA complex, involved in the assembly of the mitochondrial complex I. The chain is Evolutionarily conserved signaling intermediate in Toll pathway, mitochondrial from Homo sapiens (Human).